The chain runs to 262 residues: Chondroitin proteoglycan 3 (262 aa).

Positions 1–17 are cleaved as a signal peptide; that stretch reads MRSSFIFALLLIGAALA. The segment at 37 to 68 is disordered; the sequence is FSGEASGEASGEASGEFSGEGSGEGSGELSPE. Positions 39–53 are enriched in low complexity; it reads GEASGEASGEASGEF. Residues asparagine 140, asparagine 148, and asparagine 224 are each glycosylated (N-linked (GlcNAc...) asparagine).

This Caenorhabditis briggsae protein is Chondroitin proteoglycan 3 (cpg-3).